The following is a 439-amino-acid chain: Ectonucleotide pyrophosphatase/phosphodiesterase family member 7 (439 aa).

Residues 1 to 21 (MGHSAVLLCVALAILPACVTG) form the signal peptide. The Extracellular portion of the chain corresponds to 22–414 (APVQRQHKLL…ILRPMLRSGS (393 aa)). Zn(2+)-binding residues include aspartate 36 and threonine 72. The required for enzyme activity stretch occupies residues 69-75 (VTMTSPC). The Nucleophile role is filled by threonine 72. Residue asparagine 93 participates in substrate binding. Residues asparagine 97, asparagine 118, asparagine 143, and asparagine 165 are each glycosylated (N-linked (GlcNAc...) asparagine). Positions 196, 200, 243, and 244 each coordinate Zn(2+). Residue asparagine 264 is glycosylated (N-linked (GlcNAc...) asparagine). Histidine 350 is a binding site for Zn(2+). A helical transmembrane segment spans residues 415–435 (ASLLSSQHHLVALLVGILTCL). The Cytoplasmic segment spans residues 436-439 (AKVL).

The cofactor is Zn(2+). Post-translationally, N-glycosylated; required for activity and transport to the plasma membrane. In terms of tissue distribution, expressed in liver and small intestine.

The protein localises to the cell membrane. The enzyme catalyses a sphingomyelin + H2O = phosphocholine + an N-acylsphing-4-enine + H(+). It catalyses the reaction a 1-O-alkyl-2-acetyl-sn-glycero-3-phosphocholine + H2O = a 1-O-alkyl-2-acetyl-sn-glycerol + phosphocholine + H(+). The catalysed reaction is 1-O-octadecyl-2-acetyl-sn-glycero-3-phosphocholine + H2O = 1-O-octadecyl-2-acetyl-sn-glycerol + phosphocholine + H(+). It carries out the reaction 1-hexadecanoyl-sn-glycero-3-phosphocholine + H2O = 1-hexadecanoyl-sn-glycerol + phosphocholine + H(+). Functionally, choline-specific phosphodiesterase that hydrolyzes sphingomyelin releasing the ceramide and phosphocholine and therefore is involved in sphingomyelin digestion, ceramide formation, and fatty acid (FA) absorption in the gastrointestinal tract. Also has phospholipase C activity and can also cleave phosphocholine from palmitoyl lyso-phosphatidylcholine and platelet-activating factor (PAF) leading to its inactivation. Does not have nucleotide pyrophosphatase activity. May promote cholesterol absorption by affecting the levels of sphingomyelin derived from either diet or endogenous sources, in the intestinal lumen. This Mus musculus (Mouse) protein is Ectonucleotide pyrophosphatase/phosphodiesterase family member 7.